The chain runs to 157 residues: SsrA-binding protein (157 aa).

Residues 133-157 form a disordered region; the sequence is HDKRNSIKEREGKREVERALKSRSR.

This sequence belongs to the SmpB family.

The protein localises to the cytoplasm. Required for rescue of stalled ribosomes mediated by trans-translation. Binds to transfer-messenger RNA (tmRNA), required for stable association of tmRNA with ribosomes. tmRNA and SmpB together mimic tRNA shape, replacing the anticodon stem-loop with SmpB. tmRNA is encoded by the ssrA gene; the 2 termini fold to resemble tRNA(Ala) and it encodes a 'tag peptide', a short internal open reading frame. During trans-translation Ala-aminoacylated tmRNA acts like a tRNA, entering the A-site of stalled ribosomes, displacing the stalled mRNA. The ribosome then switches to translate the ORF on the tmRNA; the nascent peptide is terminated with the 'tag peptide' encoded by the tmRNA and targeted for degradation. The ribosome is freed to recommence translation, which seems to be the essential function of trans-translation. The chain is SsrA-binding protein from Verminephrobacter eiseniae (strain EF01-2).